The following is a 479-amino-acid chain: GTPase Der (479 aa).

EngA-type G domains are found at residues 3-166 (PVVA…AEEY) and 192-365 (LKLA…ASAT). GTP is bound by residues 9–16 (GRPNVGKS), 56–60 (DTGGI), 118–121 (NKID), 198–205 (GRPNVGKS), 245–249 (DTAGV), and 310–313 (NKWD). Residues 366–450 (QRISTSKLTK…PIKVEFREPV (85 aa)) form the KH-like domain.

This sequence belongs to the TRAFAC class TrmE-Era-EngA-EngB-Septin-like GTPase superfamily. EngA (Der) GTPase family. As to quaternary structure, associates with the 50S ribosomal subunit.

Its function is as follows. GTPase that plays an essential role in the late steps of ribosome biogenesis. The sequence is that of GTPase Der from Idiomarina loihiensis (strain ATCC BAA-735 / DSM 15497 / L2-TR).